Reading from the N-terminus, the 138-residue chain is Small ribosomal subunit protein uS11c (138 aa).

Belongs to the universal ribosomal protein uS11 family. As to quaternary structure, part of the 30S ribosomal subunit.

It localises to the plastid. It is found in the chloroplast. The chain is Small ribosomal subunit protein uS11c from Nandina domestica (Heavenly bamboo).